Reading from the N-terminus, the 250-residue chain is Exotoxin type A (250 aa).

The N-terminal stretch at 1–30 (MENNKEVLKKMVFFVLMKFLGLTILPKGIC) is a signal peptide. A disulfide bridge connects residues Cys-117 and Cys-128.

This sequence belongs to the staphylococcal/streptococcal toxin family.

Functionally, causative agent of the symptoms associated with scarlet fever, have been associated with streptococcal toxic shock-like disease and may play a role in the early events of rheumatic fever. This Streptococcus pyogenes protein is Exotoxin type A (speA).